We begin with the raw amino-acid sequence, 177 residues long: Sec-independent protein translocase protein TatB (177 aa).

A helical transmembrane segment spans residues 1–21; it reads MFDFAWSEIAVIGVVALVVIG. Positions 136 to 146 are enriched in basic and acidic residues; it reads REKTVSSETAR. Positions 136–177 are disordered; sequence REKTVSSETARRAATAPAFIPPGEAFRSARRAPAFIPPADQG.

It belongs to the TatB family. In terms of assembly, the Tat system comprises two distinct complexes: a TatABC complex, containing multiple copies of TatA, TatB and TatC subunits, and a separate TatA complex, containing only TatA subunits. Substrates initially bind to the TatABC complex, which probably triggers association of the separate TatA complex to form the active translocon.

The protein localises to the cell inner membrane. In terms of biological role, part of the twin-arginine translocation (Tat) system that transports large folded proteins containing a characteristic twin-arginine motif in their signal peptide across membranes. Together with TatC, TatB is part of a receptor directly interacting with Tat signal peptides. TatB may form an oligomeric binding site that transiently accommodates folded Tat precursor proteins before their translocation. The chain is Sec-independent protein translocase protein TatB from Granulibacter bethesdensis (strain ATCC BAA-1260 / CGDNIH1).